The sequence spans 265 residues: Small ribosomal subunit protein uS2 (265 aa).

Residues 226 to 265 are disordered; the sequence is AAAPNSASVREEEFSADAADEGKGRRAPAKKGDKKADAAE. The span at 245-265 shows a compositional bias: basic and acidic residues; that stretch reads DEGKGRRAPAKKGDKKADAAE.

Belongs to the universal ribosomal protein uS2 family.

This chain is Small ribosomal subunit protein uS2, found in Xanthomonas axonopodis pv. citri (strain 306).